Here is a 94-residue protein sequence, read N- to C-terminus: Large ribosomal subunit protein uL23 (94 aa).

The protein belongs to the universal ribosomal protein uL23 family. Part of the 50S ribosomal subunit. Contacts protein L29, and trigger factor when it is bound to the ribosome.

One of the early assembly proteins it binds 23S rRNA. One of the proteins that surrounds the polypeptide exit tunnel on the outside of the ribosome. Forms the main docking site for trigger factor binding to the ribosome. The sequence is that of Large ribosomal subunit protein uL23 from Dehalococcoides mccartyi (strain ATCC BAA-2266 / KCTC 15142 / 195) (Dehalococcoides ethenogenes (strain 195)).